Here is a 1534-residue protein sequence, read N- to C-terminus: Slit homolog 1 protein (1534 aa).

Residues 1–33 (MALTPGWGSSAGPVRPELWLLLWAAAWRLGASA) form the signal peptide. In terms of domain architecture, LRRNT spans 34–61 (CPALCTCTGTTVDCHGTGLQAIPKNIPR). 6 LRR repeats span residues 62–83 (NTER…DFAG), 86–107 (QLRV…AFDD), 110–131 (ELER…LFQN), 134–155 (ALSR…AFRG), 158–179 (DLKN…AFRA), and 182–203 (GLEV…SFNH). The N-linked (GlcNAc...) asparagine glycan is linked to Asn72. Asn192 carries an N-linked (GlcNAc...) asparagine glycan. In terms of domain architecture, LRRCT 1 spans 215–265 (NHLFCDCHLAWLSQWLRQRPTIGLFTQCSGPASLRGLNVAEVQKSEFSCSG). The LRRNT 2 domain maps to 273–309 (PTCTLSSGSCPAMCTCSNGIVDCRGKGLTAIPANLPE). A disulfide bridge links Cys286 with Cys295. LRR repeat units lie at residues 310 to 331 (TMTE…AFSP), 334 to 355 (KLRR…AFQG), 358 to 379 (SLNS…VFGG), 382 to 403 (TLQL…AFQD), and 406 to 427 (NLSL…TFTS). N-linked (GlcNAc...) asparagine glycosylation occurs at Asn406. The LRRCT 2 domain maps to 439–489 (NPFICDCNLKWLADFLRTNPIETSGARCASPRRLANKRIGQIKSKKFRCSA). 4 cysteine pairs are disulfide-bonded: Cys443–Cys466, Cys445–Cys487, Cys513–Cys519, and Cys517–Cys526. Residues 504–540 (NSECNSDVVCPHKCRCEANVVECSSLKLTKIPERIPQ) enclose the LRRNT 3 domain. LRR repeat units lie at residues 541 to 562 (STAE…GMFK), 566 to 587 (HLKK…AFEG), 590 to 611 (SVSE…MFRG), 614 to 635 (GLRT…SFTG), and 638 to 659 (NVRL…AFDT). Asn571 is a glycosylation site (N-linked (GlcNAc...) asparagine). Asn630 carries N-linked (GlcNAc...) asparagine glycosylation. The region spanning 671 to 721 (NPFNCNCQLAWLGGWLRKRKIVTGNPRCQNPDFLRQIPLQDVAFPDFRCEE) is the LRRCT 3 domain. Intrachain disulfides connect Cys675–Cys698 and Cys677–Cys719. In terms of domain architecture, LRRNT 4 spans 725–761 (EGGCLPRPQCPQECACLDTVVRCSNKHLRALPKGIPK). N-linked (GlcNAc...) asparagine glycosylation is found at Asn762, Asn801, and Asn806. LRR repeat units follow at residues 762–783 (NVTE…LSTF), 785–806 (YLQL…SFTN), 809–830 (QLTT…AFQG), and 833–854 (SLRL…IFAD). One can recognise an LRRCT 4 domain in the interval 866–916 (NPLYCDCHLRWLSSWVKTGYKEPGIARCAGPQDMEGKLLLTTPAKKFECQG). 6 EGF-like domains span residues 927–962 (DLCL…RDCE), 964–1003 (SLDS…PTCG), 1005–1041 (NTDD…KACE), 1043–1081 (LVDL…DNCS), 1083–1119 (NQDD…QLCE), and 1127–1163 (PKSP…PECE). Intrachain disulfides connect Cys929–Cys940, Cys934–Cys950, Cys952–Cys961, Cys968–Cys979, Cys973–Cys991, Cys993–Cys1002, Cys1009–Cys1020, Cys1014–Cys1029, Cys1031–Cys1040, Cys1047–Cys1060, Cys1054–Cys1069, Cys1071–Cys1080, Cys1087–Cys1098, Cys1092–Cys1107, Cys1109–Cys1118, Cys1131–Cys1142, Cys1136–Cys1151, and Cys1153–Cys1162. A glycan (N-linked (GlcNAc...) asparagine) is linked at Asn1026. Asn1079 carries an N-linked (GlcNAc...) asparagine glycan. The 174-residue stretch at 1166-1339 (LSVNFVDRDT…QMKPGVVPGC (174 aa)) folds into the Laminin G-like domain. 3 N-linked (GlcNAc...) asparagine glycosylation sites follow: Asn1189, Asn1259, and Asn1306. Disulfide bonds link Cys1313/Cys1339, Cys1342/Cys1352, Cys1347/Cys1362, Cys1364/Cys1373, Cys1381/Cys1391, Cys1386/Cys1401, Cys1403/Cys1412, Cys1422/Cys1432, Cys1427/Cys1442, Cys1444/Cys1453, Cys1459/Cys1498, Cys1477/Cys1512, Cys1488/Cys1528, and Cys1492/Cys1530. 3 consecutive EGF-like domains span residues 1340–1374 (EPCR…LHCD), 1377–1413 (ADGP…ALCN), and 1418–1454 (LAEP…ELCE). The CTCK domain maps to 1459-1534 (CRGDPVRDFH…PTKCGCALCA (76 aa)).

In terms of assembly, interacts with ROBO1 and GREM1. Predominantly expressed in adult forebrain. Expressed in fetal brain, lung and kidney.

The protein localises to the secreted. Thought to act as molecular guidance cue in cellular migration, and function appears to be mediated by interaction with roundabout homolog receptors. During neural development involved in axonal navigation at the ventral midline of the neural tube and projection of axons to different regions. SLIT1 and SLIT2 together seem to be essential for midline guidance in the forebrain by acting as repulsive signal preventing inappropriate midline crossing by axons projecting from the olfactory bulb. In Homo sapiens (Human), this protein is Slit homolog 1 protein (SLIT1).